We begin with the raw amino-acid sequence, 164 residues long: Cyclic pyranopterin monophosphate synthase (164 aa).

Substrate is bound by residues 77-79 (LCH) and 115-116 (ME). Asp-130 is a catalytic residue.

The protein belongs to the MoaC family. In terms of assembly, homohexamer; trimer of dimers.

It catalyses the reaction (8S)-3',8-cyclo-7,8-dihydroguanosine 5'-triphosphate = cyclic pyranopterin phosphate + diphosphate. It functions in the pathway cofactor biosynthesis; molybdopterin biosynthesis. Catalyzes the conversion of (8S)-3',8-cyclo-7,8-dihydroguanosine 5'-triphosphate to cyclic pyranopterin monophosphate (cPMP). This chain is Cyclic pyranopterin monophosphate synthase, found in Rhizobium meliloti (strain 1021) (Ensifer meliloti).